A 694-amino-acid chain; its full sequence is TBC1 domain family member 14 (694 aa).

Position 92 is a phosphoserine (serine 92). Disordered stretches follow at residues 108–130 (LPSCTPSAPTGSEREQAVRKSST) and 272–305 (TAQKDSKKTQKEYEDKAGRPSRPPSPKQNVRKNL). The span at 272–289 (TAQKDSKKTQKEYEDKAG) shows a compositional bias: basic and acidic residues. Serine 296 carries the post-translational modification Phosphoserine. The region spanning 402-612 (GIPPSVRGKV…RIWDVFCRDG (211 aa)) is the Rab-GAP TBC domain.

As to quaternary structure, interacts with ULK1. May interact with RAB11A and RAB11B, but does not exhibit any GTPase-activating activity toward these proteins. Interacts with TRAPPC8. In terms of tissue distribution, pubMed:15758561 detected expression at the stage of sexual maturation in testis, mainly in the spermatocytes. No expression detected in the ovary, brain, heart, lung, liver and kidney. PubMed:15200410 detected expression in brain, heart, lung, liver, spleen and kidney but not in small intestine.

The protein localises to the golgi apparatus. Its subcellular location is the cis-Golgi network. It localises to the trans-Golgi network. Functionally, plays a role in the regulation of starvation-induced autophagosome formation. Together with the TRAPPIII complex, regulates a constitutive trafficking step from peripheral recycling endosomes to the early Golgi, maintaining the cycling pool of ATG9 required for initiation of autophagy. The protein is TBC1 domain family member 14 (Tbc1d14) of Rattus norvegicus (Rat).